The chain runs to 404 residues: Tryptophan synthase beta chain (404 aa).

N6-(pyridoxal phosphate)lysine is present on Lys-95.

This sequence belongs to the TrpB family. Tetramer of two alpha and two beta chains. It depends on pyridoxal 5'-phosphate as a cofactor.

It catalyses the reaction (1S,2R)-1-C-(indol-3-yl)glycerol 3-phosphate + L-serine = D-glyceraldehyde 3-phosphate + L-tryptophan + H2O. It participates in amino-acid biosynthesis; L-tryptophan biosynthesis; L-tryptophan from chorismate: step 5/5. The beta subunit is responsible for the synthesis of L-tryptophan from indole and L-serine. The sequence is that of Tryptophan synthase beta chain (trpB) from Thermus thermophilus (strain ATCC BAA-163 / DSM 7039 / HB27).